A 235-amino-acid chain; its full sequence is Repeat element protein (235 aa).

Positions 57 to 235 (IFQELLERLS…ARRKKCRFSQ (179 aa)) are repeat element.

This chain is Repeat element protein, found in Campoletis sonorensis (CsIV).